Consider the following 149-residue polypeptide: Alpha-crystallin A chain (149 aa).

The sHSP domain maps to 28-138; it reads LLRGFMDSGI…SHSERPIPVS (111 aa). 6 residues coordinate Zn(2+): H55, H76, E78, H83, H91, and H130. Residues 125 to 149 form a disordered region; the sequence is NLVSSHSERPIPVSREEKPTSAPSS. Basic and acidic residues predominate over residues 130-143; the sequence is HSERPIPVSREEKP. A glycan (O-linked (GlcNAc) serine) is linked at S138.

It belongs to the small heat shock protein (HSP20) family. In terms of assembly, heteropolymer composed of three CRYAA and one CRYAB subunits. Inter-subunit bridging via zinc ions enhances stability, which is crucial as there is no protein turn over in the lens. Can also form homodimers and homotetramers (dimers of dimers) which serve as the building blocks of homooligomers. Within homooligomers, the zinc-binding motif is created from residues of 3 different molecules. His-76 and Glu-78 from one molecule are ligands of the zinc ion, and His-83 and His-130 residues from additional molecules complete the site with tetrahedral coordination geometry.

The protein localises to the cytoplasm. It localises to the nucleus. Contributes to the transparency and refractive index of the lens. May act as a chaperone, preventing aggregation of various proteins under a wide range of stress conditions. This Rana temporaria (European common frog) protein is Alpha-crystallin A chain (CRYAA).